A 988-amino-acid chain; its full sequence is MVPKSDQLLIVVSILEGRHFPKRPKHLLVVEAKFDGEQLATDPVDHTDQPEFATELAWEIDRKVLHQHRLQRTPIKLQCFALDPQTSAKETVGYIVLDLRTAQETKQAPKWYQLLSNKYTKFKAEVQISLTLETDTKAQVDSYKAKAAPPRDGKVLASLAGVDPKDIVAVLNEEGGYHQIGPAEHCTDPFILSVTIAFATQLEQLIPCTMKLPERQPEFFFYYSLLGNDVTNEPFSDLINPNFEPERASVRIRSSVEILRVYLALHSKLQIHLCCGDQSLGSTEIPLNGLLKKGSTEINQHPVTVEGAFTLDPPNRAKQKLAPVPLDLAPTVGVSVALQREGIDSQSLIELKTQNGHEAEHSQKRVLTPIKEKTLTGPKSPRESPAPPPPPNQTPPTKDDATESEVESLQYDKDPKPTVKGIGSVPASLAQPEATCGASEVVTSGQKIAVPAASHHFCFSVDLRSVHDLELSFPVNCILRYSYPFFGSAAPIMTNPPVEVRKNMEVFLPQSYCAFDFATMPHQLQDTFLRIPLLVELWHKDKMSKDLLLGVARIQLSNILSSEKTRFLGANGEQCWRQTYSESVPVIAAQGSNNRILDLSYTMTLEDYGLVKMREIFVSESSQGVPAVDQKPSSPPPAPCPSEIQMEPRETLEYKAALELEMWKEMQEDIFESQLKQKELAHMQALAEEWKKRDRERESLVKKKVAEYSILEGKLQKALTELETREQQLASAEAELQRERKELQLERERNLQELQDSVRRARDDCVYQVELERLKLKQLEEDKQRLQQQLNDAGNKYKTLEKEFQQFKDQQNNKPEIRLQSEINLLTLEKVELERKLESATKSKLHYKQQWGRALKELARLKQREQESQMARLKKQQEELEQMRLRYLAAEEKETVRTEQQELLDIRNELNRLRQQEQNQYQDCKEIASGKLGSPRGSGLEEGLDDYLTRLIEERDTLMRTGVYNHEDRIISELDRQIREVLTKNSAS.

Residues 1-112 (MVPKSDQLLI…QETKQAPKWY (112 aa)) form the C2 1 domain. The disordered stretch occupies residues 354 to 425 (QNGHEAEHSQ…KPTVKGIGSV (72 aa)). The span at 384–394 (SPAPPPPPNQT) shows a compositional bias: pro residues. In terms of domain architecture, C2 2 spans 435–569 (TCGASEVVTS…LSSEKTRFLG (135 aa)). A disordered region spans residues 624–644 (GVPAVDQKPSSPPPAPCPSEI). Residues 706–929 (AEYSILEGKL…QYQDCKEIAS (224 aa)) adopt a coiled-coil conformation. Residues Ser934 and Ser938 each carry the phosphoserine modification.

This sequence belongs to the CEP120 family. In terms of assembly, interacts with TACC2, TACC3, CCDC52, TALPID3. In terms of tissue distribution, ubiquitous. Highly expressed in brain, lung and kidney and weakly expressed in heart, liver, small intestine and limb (at protein level). Expressed in brain.

It is found in the cytoplasm. The protein resides in the cytoskeleton. Its subcellular location is the microtubule organizing center. It localises to the centrosome. Its function is as follows. Plays a role in the microtubule-dependent coupling of the nucleus and the centrosome. Involved in the processes that regulate centrosome-mediated interkinetic nuclear migration (INM) of neural progenitors and for proper positioning of neurons during brain development. Also implicated in the migration and selfrenewal of neural progenitors. Required for centriole duplication and maturation during mitosis and subsequent ciliogenesis. Required for the recruitment of CEP295 to the proximal end of new-born centrioles at the centriolar microtubule wall during early S phase in a PLK4-dependent manner. This Mus musculus (Mouse) protein is Centrosomal protein of 120 kDa (Cep120).